Here is a 106-residue protein sequence, read N- to C-terminus: Small ribosomal subunit protein uS10 (106 aa).

It belongs to the universal ribosomal protein uS10 family. Part of the 30S ribosomal subunit.

In terms of biological role, involved in the binding of tRNA to the ribosomes. The sequence is that of Small ribosomal subunit protein uS10 from Pyrobaculum islandicum (strain DSM 4184 / JCM 9189 / GEO3).